We begin with the raw amino-acid sequence, 96 residues long: Large ribosomal subunit protein bL28 (96 aa).

The protein belongs to the bacterial ribosomal protein bL28 family.

The protein is Large ribosomal subunit protein bL28 of Leptospira biflexa serovar Patoc (strain Patoc 1 / Ames).